A 119-amino-acid chain; its full sequence is Methylglyoxal synthase (119 aa).

The 119-residue stretch at methionine 1–isoleucine 119 folds into the MGS-like domain. Residues histidine 8, lysine 12, threonine 34–threonine 37, and serine 54–glycine 55 each bind substrate. The active-site Proton donor/acceptor is aspartate 60. Residue histidine 87 coordinates substrate.

This sequence belongs to the methylglyoxal synthase family.

It carries out the reaction dihydroxyacetone phosphate = methylglyoxal + phosphate. In terms of biological role, catalyzes the formation of methylglyoxal from dihydroxyacetone phosphate. The protein is Methylglyoxal synthase of Clostridium perfringens (strain ATCC 13124 / DSM 756 / JCM 1290 / NCIMB 6125 / NCTC 8237 / Type A).